Here is a 133-residue protein sequence, read N- to C-terminus: Nickel-responsive regulator (133 aa).

Positions 76, 87, 89, and 95 each coordinate Ni(2+).

This sequence belongs to the transcriptional regulatory CopG/NikR family. Homotetramer. The cofactor is Ni(2+).

In terms of biological role, transcriptional repressor of the nikABCDE operon. Is active in the presence of excessive concentrations of intracellular nickel. In Salmonella arizonae (strain ATCC BAA-731 / CDC346-86 / RSK2980), this protein is Nickel-responsive regulator.